The following is a 115-amino-acid chain: uncharacterized protein (115 aa).

This is an uncharacterized protein from Acidianus filamentous virus 1 (isolate United States/Yellowstone) (AFV-1).